A 766-amino-acid polypeptide reads, in one-letter code: MQIALVLLAIYGTTTTNTLRIDQCGENALGMQNGDIADSQITASSSFDKQSVGPQNARLHSELASGAWCPKPQINSKSYEFLQVTLNDTFLITSVETQGRYGNGTGREFASHYMIDYLRPGSQWIRYKNRTGHVYMDGNFDTTTPVIRVLDPPIVASRIRFVPSSKNTRTVCMRAEIHGCKHEGVTYYSTVPDGSRLDTLDFKDSMFEDSQIYTESGIKRGLGLLTDGFVAQASPFEKNQMNNSWIGWNRDTTDGRITILFEFEEVHNFTDVVLATFGNRIDGIDVIFSQDGKTFPLFSQISSSERQSLNNTSRRYDFRVPLHNRAGRKVRISIKFSSDWMFLTEVHFTSAANLTLLSEKIPPPSSAATQQLLVVCGIIFLTIFACVAYCVSVCLKRRQKNKSVDSNVKKDLIITHMGNKPTCHVFPSNGKLSNGHYEVANDILYARSQKSTLLSVSSKSTFSCRAIPPTWTDFNFPPPPEGREEHTYSQPVSPENSSNGSYKSVRKIQALKKYPSSALLIGKAIGEGKFTMIKECIIFGGLKCAHKSTKEEDCVHGTRALGDEIACLLQCGRHPRIVELFGVDESYNLLLEHVEYGCIRNFWMASEAPLDTEFLVRICKDIYSAMAYLESIRIVHGHFTPNNILMDGEFHAKVCSPRGPSHHAQLRYSAPESIVNNEFTHKSDAWAVATTVYEMAYQCRQRPYEELTNEQIVDNACALLDHQPNAVVPLMPTVFNYEILQLLTRCFRVDQLERPTFERLVKPFQD.

A signal peptide spans 1-18; sequence MQIALVLLAIYGTTTTNT. The Extracellular portion of the chain corresponds to 19 to 372; the sequence is LRIDQCGENA…PPSSAATQQL (354 aa). 2 F5/8 type C domains span residues 24–180 and 195–351; these read CGEN…IHGC and SRLD…FTSA. C24 and C180 are joined by a disulfide. 7 N-linked (GlcNAc...) asparagine glycosylation sites follow: N87, N103, N129, N242, N268, N311, and N353. A helical membrane pass occupies residues 373 to 393; it reads LVVCGIIFLTIFACVAYCVSV. Over 394–766 the chain is Cytoplasmic; sequence CLKRRQKNKS…FERLVKPFQD (373 aa). Residues 475–501 form a disordered region; the sequence is NFPPPPEGREEHTYSQPVSPENSSNGS. A compositionally biased stretch (polar residues) spans 488–501; sequence YSQPVSPENSSNGS. The region spanning 519 to 766 is the Protein kinase domain; that stretch reads LLIGKAIGEG…FERLVKPFQD (248 aa). Residues 525–533 and K547 each bind ATP; that span reads IGEGKFTMI.

The protein belongs to the protein kinase superfamily. Tyr protein kinase family. Insulin receptor subfamily. Expressed in neurons in head and tail, some motoneurons in ventral nerve cord, in PVP interneurons, pharynx and stomato-intestinal muscle.

Its subcellular location is the cell membrane. It is found in the cell projection. The protein localises to the axon. The protein resides in the perikaryon. Its function is as follows. Receptor which, together with svh-4, is involved in axon guidance to establish the tracts for the ventral and dorsal nerve cords during nervous system development. May play a role in axon regeneration following injury in D-type motor neurons. This chain is Discoidin domain-containing receptor A, found in Caenorhabditis elegans.